Reading from the N-terminus, the 60-residue chain is Large ribosomal subunit protein uL30 (60 aa).

This sequence belongs to the universal ribosomal protein uL30 family. Part of the 50S ribosomal subunit.

This is Large ribosomal subunit protein uL30 from Bacillus mycoides (strain KBAB4) (Bacillus weihenstephanensis).